Reading from the N-terminus, the 355-residue chain is Aminopeptidase N (355 aa).

Substrate-binding positions include Glu-156 and 290 to 294 (GAMEN). A Zn(2+)-binding site is contributed by His-326. Glu-327 acts as the Proton acceptor in catalysis. Zn(2+) is bound by residues His-330 and Glu-349. Glu-349 lines the substrate pocket.

This sequence belongs to the peptidase M1 family. It depends on Zn(2+) as a cofactor.

The protein localises to the cytoplasm. It catalyses the reaction Release of an N-terminal amino acid, Xaa-|-Yaa- from a peptide, amide or arylamide. Xaa is preferably Ala, but may be most amino acids including Pro (slow action). When a terminal hydrophobic residue is followed by a prolyl residue, the two may be released as an intact Xaa-Pro dipeptide.. Functionally, aminopeptidase N is involved in the degradation of intracellular peptides generated by protein breakdown during normal growth as well as in response to nutrient starvation. The protein is Aminopeptidase N (pepN) of Acetobacter pasteurianus (Acetobacter turbidans).